Reading from the N-terminus, the 305-residue chain is Tyrosine recombinase XerC (305 aa).

In terms of domain architecture, Core-binding (CB) spans 2 to 88 (TNKQRLVHLF…ALRSFYKFLL (87 aa)). Residues 109-295 (RIPSFLYEEE…SKDSLRKTYM (187 aa)) enclose the Tyr recombinase domain. Residues Arg-149, Lys-173, His-247, Arg-250, and His-273 contribute to the active site. Tyr-282 serves as the catalytic O-(3'-phospho-DNA)-tyrosine intermediate.

This sequence belongs to the 'phage' integrase family. XerC subfamily. As to quaternary structure, forms a cyclic heterotetrameric complex composed of two molecules of XerC and two molecules of XerD.

The protein resides in the cytoplasm. Its function is as follows. Site-specific tyrosine recombinase, which acts by catalyzing the cutting and rejoining of the recombining DNA molecules. The XerC-XerD complex is essential to convert dimers of the bacterial chromosome into monomers to permit their segregation at cell division. It also contributes to the segregational stability of plasmids. This chain is Tyrosine recombinase XerC, found in Bacillus pumilus (strain SAFR-032).